We begin with the raw amino-acid sequence, 318 residues long: 3'-5' exoribonuclease YhaM (318 aa).

Residues 163 to 279 (HVVSMLDLAK…LHYIDNLDAK (117 aa)) form the HD domain.

This sequence belongs to the YhaM family.

Functionally, shows a 3'-5' exoribonuclease activity. The polypeptide is 3'-5' exoribonuclease YhaM (Bacillus cytotoxicus (strain DSM 22905 / CIP 110041 / 391-98 / NVH 391-98)).